The sequence spans 1589 residues: Pentafunctional AROM polypeptide (1589 aa).

Residues 1-384 (MAAPTTIKIL…HEQQASVVSN (384 aa)) are 3-dehydroquinate synthase. Residues 44–46 (DTT), 81–84 (ELSK), 114–116 (GGV), and aspartate 119 contribute to the NAD(+) site. Residue arginine 130 coordinates 7-phospho-2-dehydro-3-deoxy-D-arabino-heptonate. 139-140 (TT) contacts NAD(+). The 7-phospho-2-dehydro-3-deoxy-D-arabino-heptonate site is built by aspartate 146 and lysine 152. Lysine 161 provides a ligand contact to NAD(+). Residue asparagine 162 participates in 7-phospho-2-dehydro-3-deoxy-D-arabino-heptonate binding. NAD(+) contacts are provided by residues 179–182 (FLNT) and asparagine 190. Residue glutamate 194 coordinates Zn(2+). Residues 194–197 (EVIK) and lysine 250 each bind 7-phospho-2-dehydro-3-deoxy-D-arabino-heptonate. The Proton acceptor; for 3-dehydroquinate synthase activity role is filled by glutamate 260. 7-phospho-2-dehydro-3-deoxy-D-arabino-heptonate contacts are provided by residues 264-268 (RNLLN) and histidine 271. Histidine 271 contributes to the Zn(2+) binding site. The active-site Proton acceptor; for 3-dehydroquinate synthase activity is histidine 275. 7-phospho-2-dehydro-3-deoxy-D-arabino-heptonate-binding residues include histidine 287 and lysine 356. A Zn(2+)-binding site is contributed by histidine 287. The interval 397-841 (VSPGVPKSLQ…WDTLAQLFKA (445 aa)) is EPSP synthase. The active-site For EPSP synthase activity is cysteine 823. The interval 861–1052 (ASIFIIGMRG…KKKPQSFFVS (192 aa)) is shikimate kinase. 867 to 874 (GMRGAGKT) serves as a coordination point for ATP. A 3-dehydroquinase region spans residues 1053–1273 (LTLPDLRPSA…AAPGQLSAQD (221 aa)). Histidine 1176 serves as the catalytic Proton acceptor; for 3-dehydroquinate dehydratase activity. Lysine 1204 acts as the Schiff-base intermediate with substrate; for 3-dehydroquinate dehydratase activity in catalysis. Residues 1286–1589 (PRKFAIFGKP…VMNPGTDNRG (304 aa)) are shikimate dehydrogenase.

It in the N-terminal section; belongs to the sugar phosphate cyclases superfamily. Dehydroquinate synthase family. This sequence in the 2nd section; belongs to the EPSP synthase family. In the 3rd section; belongs to the shikimate kinase family. The protein in the 4th section; belongs to the type-I 3-dehydroquinase family. It in the C-terminal section; belongs to the shikimate dehydrogenase family. Homodimer. Zn(2+) serves as cofactor.

The protein localises to the cytoplasm. It catalyses the reaction 7-phospho-2-dehydro-3-deoxy-D-arabino-heptonate = 3-dehydroquinate + phosphate. The enzyme catalyses 3-dehydroquinate = 3-dehydroshikimate + H2O. It carries out the reaction shikimate + NADP(+) = 3-dehydroshikimate + NADPH + H(+). The catalysed reaction is shikimate + ATP = 3-phosphoshikimate + ADP + H(+). It catalyses the reaction 3-phosphoshikimate + phosphoenolpyruvate = 5-O-(1-carboxyvinyl)-3-phosphoshikimate + phosphate. Its pathway is metabolic intermediate biosynthesis; chorismate biosynthesis; chorismate from D-erythrose 4-phosphate and phosphoenolpyruvate: step 2/7. It functions in the pathway metabolic intermediate biosynthesis; chorismate biosynthesis; chorismate from D-erythrose 4-phosphate and phosphoenolpyruvate: step 3/7. It participates in metabolic intermediate biosynthesis; chorismate biosynthesis; chorismate from D-erythrose 4-phosphate and phosphoenolpyruvate: step 4/7. The protein operates within metabolic intermediate biosynthesis; chorismate biosynthesis; chorismate from D-erythrose 4-phosphate and phosphoenolpyruvate: step 5/7. Its pathway is metabolic intermediate biosynthesis; chorismate biosynthesis; chorismate from D-erythrose 4-phosphate and phosphoenolpyruvate: step 6/7. In terms of biological role, the AROM polypeptide catalyzes 5 consecutive enzymatic reactions in prechorismate polyaromatic amino acid biosynthesis. The protein is Pentafunctional AROM polypeptide of Coccidioides posadasii (strain C735) (Valley fever fungus).